Consider the following 59-residue polypeptide: Mitochondrial sheath formation-associated protein (59 aa).

At 1–6 the chain is on the mitochondrial intermembrane side; that stretch reads MIVLGW. 2 consecutive transmembrane segments (helical) span residues 2 to 22 and 7 to 23; these read IVLG…FPEL and MFFV…PELM. The Cytoplasmic portion of the chain corresponds to 24-40; sequence PPTLKWQERWPVQESKT.

In terms of assembly, interacts with VDAC3.

The protein resides in the mitochondrion outer membrane. Functionally, regulates sperm development. May be involved in mitochondrial sheath formation. This chain is Mitochondrial sheath formation-associated protein, found in Homo sapiens (Human).